We begin with the raw amino-acid sequence, 228 residues long: Elongation factor 1-beta (228 aa).

The disordered stretch occupies residues 74–116 (ASKAFTAYGPEGSEASANPKDKPAEEEEEEDLFASDSEDEDPA). Residues 84–93 (EGSEASANPK) are igE-binding. Acidic residues predominate over residues 97–115 (AEEEEEEDLFASDSEDEDP).

The protein belongs to the EF-1-beta/EF-1-delta family. As to quaternary structure, EF-1 is composed of 4 subunits: alpha, beta, delta, and gamma.

EF-1-beta and EF-1-delta stimulate the exchange of GDP bound to EF-1-alpha to GTP. The protein is Elongation factor 1-beta of Penicillium citrinum.